Here is a 215-residue protein sequence, read N- to C-terminus: Protein-L-isoaspartate O-methyltransferase (215 aa).

Residue serine 62 is part of the active site.

Belongs to the methyltransferase superfamily. L-isoaspartyl/D-aspartyl protein methyltransferase family.

Its subcellular location is the cytoplasm. It catalyses the reaction [protein]-L-isoaspartate + S-adenosyl-L-methionine = [protein]-L-isoaspartate alpha-methyl ester + S-adenosyl-L-homocysteine. Functionally, catalyzes the methyl esterification of L-isoaspartyl residues in peptides and proteins that result from spontaneous decomposition of normal L-aspartyl and L-asparaginyl residues. It plays a role in the repair and/or degradation of damaged proteins. In Bradyrhizobium sp. (strain ORS 278), this protein is Protein-L-isoaspartate O-methyltransferase.